The following is a 723-amino-acid chain: Transmembrane channel-like protein 7 (723 aa).

The interval 1 to 21 (MSESSASALQLGRPSRQPAVH) is disordered. Residues 1 to 168 (MSESSASALQ…GIQSYFSFLR (168 aa)) are Extracellular-facing. Residue Asn-24 is glycosylated (N-linked (GlcNAc...) asparagine). The tract at residues 51-70 (RRRTTVHSRDKQSGTLLKST) is disordered. Asn-84 is a glycosylation site (N-linked (GlcNAc...) asparagine). Ser-89 is subject to Phosphoserine. N-linked (GlcNAc...) asparagine glycosylation is present at Asn-96. Residues 169-189 (FLVLLNLVIFLIIFMLVLLPI) form a helical membrane-spanning segment. At 190-219 (LLTKYKITNSSFVLIPFKDTDIQCTVYPVS) the chain is on the cytoplasmic side. The chain crosses the membrane as a helical span at residues 220–240 (SSGLIYFYSYIIDLLSGTGFL). Residues 241 to 263 (EETSLFYGHYTIDGVKFQNFTYD) lie on the Extracellular side of the membrane. Asn-259 carries an N-linked (GlcNAc...) asparagine glycan. Residues 264 to 284 (LPLAYLISTIAYLALSLLWIV) form a helical membrane-spanning segment. The Cytoplasmic segment spans residues 285-362 (KRSVEGFKIN…EETIRIYSLR (78 aa)). The chain crosses the membrane as a helical span at residues 363–383 (LFLNCIVLAVLGACFYAIYVA). The Extracellular portion of the chain corresponds to 384–404 (TVFSQEHMKKEIDKMVFGENL). A helical transmembrane segment spans residues 405 to 425 (LILYLPSIVITLANFITPMIF). Over 426-494 (AKIIRYEDYS…PCWETQVGQE (69 aa)) the chain is Cytoplasmic. A helical transmembrane segment spans residues 495–515 (MYKLMIFDFIIILAVTLFVDF). Residues 516–555 (PRKLLVTYCSSWKLIQCWGQQEFAIPDNVLGIVYGQTICW) are Extracellular-facing. Residues 556 to 576 (IGAFFSPLLPAIATLKFIIIF) traverse the membrane as a helical segment. Over 577 to 601 (YVKEWSLLYTCRPSPRPFRASNSNF) the chain is Cytoplasmic. A helical membrane pass occupies residues 602-622 (FFLLVLLIGLCLAIIPLTISI). The Extracellular portion of the chain corresponds to 623–665 (SRIPSSKACGPFTNFNTTWEVIPKTVSTFPSSLQSFIHGVTSE). The N-linked (GlcNAc...) asparagine glycan is linked to Asn-638. The helical transmembrane segment at 666 to 686 (AFAVPFFMIICLIMFYFIALA) threads the bilayer. Residues 687–723 (GAHKRVVIQLREQLSLESRDKRYLIQKLTEAQRDTRN) are Cytoplasmic-facing.

This sequence belongs to the TMC family. Interacts with PIEZO2; the interaction inhibits PIEZO2-conducted mechanically activated currents.

The protein localises to the membrane. Its function is as follows. Acts as an inhibitory modulator of PIEZO2 mechanosensitive channel in dorsal root ganglion (DRG) neurons through physical interactions or interference with the interaction between Piezo2 and the cytoskeleton. The chain is Transmembrane channel-like protein 7 (TMC7) from Macaca fascicularis (Crab-eating macaque).